Consider the following 89-residue polypeptide: Arminin 375 (89 aa).

The first 18 residues, 1–18 (MKAVFAILFLAFIALTYA), serve as a signal peptide directing secretion. The propeptide occupies 19–57 (KSYDEVKEEIKNEVEREIFEDLEEESDELDNYVEESNDA). Alanine amide is present on alanine 86.

Belongs to the arminin family. As to expression, expressed in entodermal epithelium along the body column.

Its subcellular location is the secreted. It localises to the target cell membrane. In terms of biological role, antimicrobial peptide with a broad-spectrum antimicrobial activity. Keeps its antibacterial activity under a wide range of salt concentrations that mimic physiological conditions of human blood, which is surprising, since Hydra is an obligate freshwater animal with nearly no salt tolerance. Does not affect red blood cells. The sequence is that of Arminin 375 from Hydra oligactis (Brown hydra).